We begin with the raw amino-acid sequence, 195 residues long: Thymidine kinase (195 aa).

Residues 8–15 (GLMGSGKS) and 86–89 (DESQ) each bind ATP. Residue Glu87 is the Proton acceptor of the active site. Cys146, Cys151, Cys184, and His187 together coordinate Zn(2+).

This sequence belongs to the thymidine kinase family. Homotetramer.

It localises to the cytoplasm. It catalyses the reaction thymidine + ATP = dTMP + ADP + H(+). The polypeptide is Thymidine kinase (tdk) (Bacillus subtilis subsp. natto).